The sequence spans 218 residues: Histidine biosynthesis bifunctional protein HisIE (218 aa).

The tract at residues 1-118 (MTDLSELNFD…DAPDTGLDGT (118 aa)) is phosphoribosyl-AMP cyclohydrolase. A phosphoribosyl-ATP pyrophosphohydrolase region spans residues 119-218 (LERVYATITE…SGLKGPKEVG (100 aa)).

In the N-terminal section; belongs to the PRA-CH family. It in the C-terminal section; belongs to the PRA-PH family.

It is found in the cytoplasm. It catalyses the reaction 1-(5-phospho-beta-D-ribosyl)-ATP + H2O = 1-(5-phospho-beta-D-ribosyl)-5'-AMP + diphosphate + H(+). The catalysed reaction is 1-(5-phospho-beta-D-ribosyl)-5'-AMP + H2O = 1-(5-phospho-beta-D-ribosyl)-5-[(5-phospho-beta-D-ribosylamino)methylideneamino]imidazole-4-carboxamide. The protein operates within amino-acid biosynthesis; L-histidine biosynthesis; L-histidine from 5-phospho-alpha-D-ribose 1-diphosphate: step 2/9. It functions in the pathway amino-acid biosynthesis; L-histidine biosynthesis; L-histidine from 5-phospho-alpha-D-ribose 1-diphosphate: step 3/9. This is Histidine biosynthesis bifunctional protein HisIE (hisI) from Deinococcus radiodurans (strain ATCC 13939 / DSM 20539 / JCM 16871 / CCUG 27074 / LMG 4051 / NBRC 15346 / NCIMB 9279 / VKM B-1422 / R1).